Here is a 484-residue protein sequence, read N- to C-terminus: MAKFTPANLPAEFLDTMRDIMPSSLSMDDFIAACQRPLRRSIRVNTLKISVEAFLRLVQPYGWQLEPIPWCQEGFWLLNAEEENTRLGNTLEHLSGLFYIQEASSMLPVSALFHRNEALETVLDVAAAPGSKTTQIAARLDNKGAIVANEYSASRVKVLHANISRCGVSNTAMTHFDGRVFGAALPEYFDAILLDAPCSGEGVVRKDPAAMSHWSPESITEIAATQRDLILSAFHALKPGGVMIYSTCTLNKQENQQVCHWLQAQFPDACEFESLRDLFTDAERATTEDGFLHVFPQIYDSEGFFVARLRKTASVPPLPRPGYKVGKFPFSPVAPKDCVPLIQAARKQGIHWDETLLQLWQRDSEIWLFPAALASAFGNIKFSRIGIKLAERFPKGFRWQHEAVVALADPNANNAYALTDDIACEWFQGKDCYPEPLPTADELILTYQNTPVGLAKRINSRIKNSLPRDLVRDGASSAQQLAKE.

Residues 126 to 132 (AAAPGSK), E150, D177, and D195 each bind S-adenosyl-L-methionine. The active-site Nucleophile is the C248.

Belongs to the class I-like SAM-binding methyltransferase superfamily. RsmB/NOP family.

The protein resides in the cytoplasm. It carries out the reaction cytidine(1407) in 16S rRNA + S-adenosyl-L-methionine = 5-methylcytidine(1407) in 16S rRNA + S-adenosyl-L-homocysteine + H(+). Specifically methylates the cytosine at position 1407 (m5C1407) of 16S rRNA. This chain is Ribosomal RNA small subunit methyltransferase F, found in Pectobacterium carotovorum subsp. carotovorum (strain PC1).